The primary structure comprises 250 residues: Probable transcriptional regulatory protein PERMA_0079 (250 aa).

It belongs to the TACO1 family.

The protein resides in the cytoplasm. In Persephonella marina (strain DSM 14350 / EX-H1), this protein is Probable transcriptional regulatory protein PERMA_0079.